The sequence spans 192 residues: Cytidylate kinase (192 aa).

Residue 12–20 participates in ATP binding; the sequence is GLAGSGTTT.

It belongs to the cytidylate kinase family. Type 2 subfamily.

The protein localises to the cytoplasm. The catalysed reaction is CMP + ATP = CDP + ADP. It catalyses the reaction dCMP + ATP = dCDP + ADP. This is Cytidylate kinase from Pyrococcus furiosus (strain ATCC 43587 / DSM 3638 / JCM 8422 / Vc1).